Here is a 145-residue protein sequence, read N- to C-terminus: MKTCTVICCTALVLGLTAYAQKECVAVSSQLAQIIGHLPNKSPLSAFTRRDLIRAFKMAQESGHHLAGEKPRTFTEKMNHQMVLTYLKRYNYLAGGHITPETVKRAVLKLQHNSGVLEQTGVIDVPTINFVKTHPRGHVEPLPSQ.

The N-terminal stretch at 1-20 (MKTCTVICCTALVLGLTAYA) is a signal peptide.

This is an uncharacterized protein from Aedes vexans (Inland floodwater mosquito).